Here is a 287-residue protein sequence, read N- to C-terminus: Thiazole synthase (287 aa).

Residue Lys-111 is the Schiff-base intermediate with DXP of the active site. 1-deoxy-D-xylulose 5-phosphate contacts are provided by residues Gly-172, 203–204 (AG), and 225–226 (NT). The interval 268–287 (PQEGVISTRPYGSQADEIGS) is disordered.

Belongs to the ThiG family. As to quaternary structure, homotetramer. Forms heterodimers with either ThiH or ThiS.

The protein resides in the cytoplasm. The catalysed reaction is [ThiS sulfur-carrier protein]-C-terminal-Gly-aminoethanethioate + 2-iminoacetate + 1-deoxy-D-xylulose 5-phosphate = [ThiS sulfur-carrier protein]-C-terminal Gly-Gly + 2-[(2R,5Z)-2-carboxy-4-methylthiazol-5(2H)-ylidene]ethyl phosphate + 2 H2O + H(+). Its pathway is cofactor biosynthesis; thiamine diphosphate biosynthesis. Functionally, catalyzes the rearrangement of 1-deoxy-D-xylulose 5-phosphate (DXP) to produce the thiazole phosphate moiety of thiamine. Sulfur is provided by the thiocarboxylate moiety of the carrier protein ThiS. In vitro, sulfur can be provided by H(2)S. The polypeptide is Thiazole synthase (Rhodopirellula baltica (strain DSM 10527 / NCIMB 13988 / SH1)).